We begin with the raw amino-acid sequence, 399 residues long: Serine palmitoyltransferase (399 aa).

Pyridoxal 5'-phosphate contacts are provided by residues 113–114 (GF), histidine 213, threonine 241, and serine 243. The residue at position 244 (lysine 244) is an N6-(pyridoxal phosphate)lysine.

It belongs to the class-II pyridoxal-phosphate-dependent aminotransferase family. Homodimer. Pyridoxal 5'-phosphate is required as a cofactor.

The protein localises to the cytoplasm. The protein resides in the cell inner membrane. It carries out the reaction L-serine + hexadecanoyl-CoA + H(+) = 3-oxosphinganine + CO2 + CoA. The protein operates within lipid metabolism; sphingolipid metabolism. In terms of biological role, catalyzes the condensation of L-serine with palmitoyl-CoA (hexadecanoyl-CoA) to produce 3-oxosphinganine. Exhibits a broad substrate specificity concerning the chain length and the degree of unsaturation of acyl-CoA. The polypeptide is Serine palmitoyltransferase (Sphingobacterium multivorum).